The sequence spans 759 residues: Phosphoribosylformylglycinamidine synthase subunit PurL (759 aa).

The active site involves His48. ATP is bound by residues Tyr51 and Lys91. Glu93 contacts Mg(2+). Residues 94 to 97 (SHNH) and Arg116 contribute to the substrate site. The Proton acceptor role is filled by His95. Asp117 contributes to the Mg(2+) binding site. A substrate-binding site is contributed by Gln240. Position 268 (Asp268) interacts with Mg(2+). 317 to 319 (ESQ) is a substrate binding site. 2 residues coordinate ATP: Asn501 and Gly538. Asn539 lines the Mg(2+) pocket. Ser541 is a binding site for substrate.

It belongs to the FGAMS family. Monomer. Part of the FGAM synthase complex composed of 1 PurL, 1 PurQ and 2 PurS subunits.

It localises to the cytoplasm. It carries out the reaction N(2)-formyl-N(1)-(5-phospho-beta-D-ribosyl)glycinamide + L-glutamine + ATP + H2O = 2-formamido-N(1)-(5-O-phospho-beta-D-ribosyl)acetamidine + L-glutamate + ADP + phosphate + H(+). Its pathway is purine metabolism; IMP biosynthesis via de novo pathway; 5-amino-1-(5-phospho-D-ribosyl)imidazole from N(2)-formyl-N(1)-(5-phospho-D-ribosyl)glycinamide: step 1/2. In terms of biological role, part of the phosphoribosylformylglycinamidine synthase complex involved in the purines biosynthetic pathway. Catalyzes the ATP-dependent conversion of formylglycinamide ribonucleotide (FGAR) and glutamine to yield formylglycinamidine ribonucleotide (FGAM) and glutamate. The FGAM synthase complex is composed of three subunits. PurQ produces an ammonia molecule by converting glutamine to glutamate. PurL transfers the ammonia molecule to FGAR to form FGAM in an ATP-dependent manner. PurS interacts with PurQ and PurL and is thought to assist in the transfer of the ammonia molecule from PurQ to PurL. This is Phosphoribosylformylglycinamidine synthase subunit PurL from Chlorobaculum tepidum (strain ATCC 49652 / DSM 12025 / NBRC 103806 / TLS) (Chlorobium tepidum).